Consider the following 456-residue polypeptide: UDP-glycosyltransferase 84B1 (456 aa).

Residues serine 278, 332 to 334, 349 to 357, and 371 to 374 contribute to the UDP-alpha-D-glucose site; these read SPQ, HCGWNSTME, and WTDQ.

It belongs to the UDP-glycosyltransferase family.

Possesses low quercetin 7-O-glucosyltransferase activity in vitro. The sequence is that of UDP-glycosyltransferase 84B1 (UGT84B1) from Arabidopsis thaliana (Mouse-ear cress).